We begin with the raw amino-acid sequence, 822 residues long: Glycerol-3-phosphate acyltransferase (822 aa).

The HXXXXD motif motif lies at 306–311 (CHRSHM). The interval 803–822 (ASSSAEMEAESQAVEETTQE) is disordered.

Belongs to the GPAT/DAPAT family.

It localises to the cell inner membrane. It catalyses the reaction sn-glycerol 3-phosphate + an acyl-CoA = a 1-acyl-sn-glycero-3-phosphate + CoA. It functions in the pathway phospholipid metabolism; CDP-diacylglycerol biosynthesis; CDP-diacylglycerol from sn-glycerol 3-phosphate: step 1/3. This is Glycerol-3-phosphate acyltransferase from Pectobacterium carotovorum subsp. carotovorum (strain PC1).